The chain runs to 2389 residues: Highly reducing polyketide synthase Dhc3 (2389 aa).

Positions 9–433 (DVPIAVVGLA…GTNGHAVLES (425 aa)) constitute a Ketosynthase family 3 (KS3) domain. Catalysis depends on for beta-ketoacyl synthase activity residues cysteine 181, histidine 316, and histidine 356. A malonyl-CoA:ACP transacylase (MAT) domain region spans residues 551 to 861 (FVFTGQGAQW…LSGPVEQILN (311 aa)). The active-site For malonyltransferase activity is serine 641. An N-terminal hotdog fold region spans residues 944 to 1079 (RSLIGAQVPM…GLITIDYADT (136 aa)). Residues 944 to 1263 (RSLIGAQVPM…VSELENDTEA (320 aa)) enclose the PKS/mFAS DH domain. The tract at residues 946–1262 (LIGAQVPMMD…RVSELENDTE (317 aa)) is dehydratase (DH) domain. Residue histidine 976 is the Proton acceptor; for dehydratase activity of the active site. Residues 1107–1263 (PDICSKEDFY…VSELENDTEA (157 aa)) are C-terminal hotdog fold. Catalysis depends on aspartate 1173, which acts as the Proton donor; for dehydratase activity. The interval 1673 to 1987 (GLLDTLAFIE…QGKHRGKLVL (315 aa)) is enoylreductase (ER) domain. Residues 2011 to 2191 (ATYLFVGGLG…VAVDLGIMRD (181 aa)) form a catalytic ketoreductase (KRc) domain region. In terms of domain architecture, Carrier spans 2302–2379 (EAVSIITDAL…EFAEKIAEKS (78 aa)). Position 2339 is an O-(pantetheine 4'-phosphoryl)serine (serine 2339).

The protein operates within mycotoxin biosynthesis. Its function is as follows. Highly reducing polyketide synthase; part of the gene cluster that mediates the biosynthesis of 10,11-dehydrocurvularin, a prevalent fungal phytotoxin with heat shock response and immune-modulatory activities. The highly reducing polyketide synthase Dhc3 is responsible for biosynthesis up to the tetraketide stage. The non-reducing polyketide synthase Dhc5 then conducts four additional chain extension cycles, producing the unreduced part of the nascent octaketide from C-1 to C-8 in 10,11-dehydrocurvularin. This is Highly reducing polyketide synthase Dhc3 (Dhc3) from Alternaria cinerariae.